The following is a 248-amino-acid chain: 2,3-bisphosphoglycerate-dependent phosphoglycerate mutase (248 aa).

Residues 8-15 (RHGESEWN), 21-22 (TG), R60, 87-90 (ERHY), K98, 114-115 (RR), and 183-184 (GN) each bind substrate. The active-site Tele-phosphohistidine intermediate is the H9. E87 (proton donor/acceptor) is an active-site residue.

It belongs to the phosphoglycerate mutase family. BPG-dependent PGAM subfamily.

The catalysed reaction is (2R)-2-phosphoglycerate = (2R)-3-phosphoglycerate. It participates in carbohydrate degradation; glycolysis; pyruvate from D-glyceraldehyde 3-phosphate: step 3/5. In terms of biological role, catalyzes the interconversion of 2-phosphoglycerate and 3-phosphoglycerate. The polypeptide is 2,3-bisphosphoglycerate-dependent phosphoglycerate mutase (Borrelia hermsii (strain HS1 / DAH)).